The chain runs to 220 residues: Probable N-acetyl-alpha-D-glucosaminyl L-malate deacetylase 2 (220 aa).

Zn(2+) is bound by residues histidine 11, aspartate 14, and histidine 125.

The protein belongs to the PIGL family. It depends on Zn(2+) as a cofactor.

The enzyme catalyses (S)-malyl N-acetyl-alpha-D-glucosaminide + H2O = (S)-malyl alpha-D-glucosaminide + acetate. Involved in bacillithiol (BSH) biosynthesis. Catalyzes the second step of the pathway, the deacetylation of N-acetylglucosaminylmalate (GlcNAc-Mal) to glucosamine malate (GlcN-Mal). Has weak activity compared with bshB1. This Bacillus cereus (strain ATCC 14579 / DSM 31 / CCUG 7414 / JCM 2152 / NBRC 15305 / NCIMB 9373 / NCTC 2599 / NRRL B-3711) protein is Probable N-acetyl-alpha-D-glucosaminyl L-malate deacetylase 2.